We begin with the raw amino-acid sequence, 182 residues long: MKQRLLFLGPPGAGKGTQAERLCAAHELMHLSTGDLLRTEVGAKTPLGQEAAAVMNRGELVSDELVLAIVENQLKNQNGGWLLDGFPRTLIQAKALEPLLEELKQPIEAVVLLELNDAVLIERLISRGRSDDNESVIRNRLEVYREKTAPLIDHYRQQGLLQTVEAHGSIESIAISIEKSLC.

12 to 17 (GAGKGT) lines the ATP pocket. The segment at 32–61 (STGDLLRTEVGAKTPLGQEAAAVMNRGELV) is NMP. AMP-binding positions include Thr-33, Arg-38, 59–61 (ELV), 85–88 (GFPR), and Gln-92. An LID region spans residues 126-132 (SRGRSDD). Arg-127 is an ATP binding site. AMP is bound by residues Arg-129 and Arg-140. Gly-168 serves as a coordination point for ATP.

This sequence belongs to the adenylate kinase family. In terms of assembly, monomer.

The protein resides in the cytoplasm. The catalysed reaction is AMP + ATP = 2 ADP. The protein operates within purine metabolism; AMP biosynthesis via salvage pathway; AMP from ADP: step 1/1. In terms of biological role, catalyzes the reversible transfer of the terminal phosphate group between ATP and AMP. Plays an important role in cellular energy homeostasis and in adenine nucleotide metabolism. The protein is Adenylate kinase of Prochlorococcus marinus (strain MIT 9313).